The chain runs to 315 residues: MSQNKPAVRTFQDLILALQNYWAEQGCVVLQPYDMEVGAGTFHTATFLRAVGPETWNAAYVQPSRRPTDGRYGENPNRLQHYYQFQVVLKPNPENFQELYLGSLKAIGLDPEVHDIRFVEDNWESPTLGAWGLGWEIWLNGMEVTQFTYFQQVGGIECYPVTGEITYGLERLAMYLQGVDSVYDLIWTDGPFGTVTYGDVFHQNEVEQSTYNFEHANVEKLFELFDFYESEANRLIELELPLPTYEMVLKASHTFNLLDARRAISVTARQQYILRVRTLARAVAQSYLQARAKLGFPMATPELRDEVLAKLEAQA.

Belongs to the class-II aminoacyl-tRNA synthetase family. As to quaternary structure, tetramer of two alpha and two beta subunits.

The protein localises to the cytoplasm. The catalysed reaction is tRNA(Gly) + glycine + ATP = glycyl-tRNA(Gly) + AMP + diphosphate. The protein is Glycine--tRNA ligase alpha subunit of Ectopseudomonas mendocina (strain ymp) (Pseudomonas mendocina).